A 305-amino-acid polypeptide reads, in one-letter code: Deoxyribonuclease gamma (305 aa).

An N-terminal signal peptide occupies residues 1–20; the sequence is MSRELAPLLLLLLSIHSALA. The Bipartite nuclear localization signal signature appears at 35–51; that stretch reads KQEDKNAMDVIVKVIKR. Catalysis depends on residues E100 and H155. C194 and C231 are oxidised to a cystine. A not required for free DNA-nuclease activity but required for activity towards liposome-coated DNA region spans residues 284 to 305; that stretch reads SRAFTNSKKSVTLRKKTKSKRS. Residues 296–304 carry the Nuclear localization signal motif; that stretch reads LRKKTKSKR.

Belongs to the DNase I family. Requires Ca(2+) as cofactor. Mg(2+) serves as cofactor. In terms of processing, poly-ADP-ribosylated by PARP1. ADP-ribosylation negatively regulates enzymatic activity during apoptosis. Liver and spleen.

It is found in the nucleus. It localises to the endoplasmic reticulum. Its subcellular location is the secreted. Inhibited by zinc. Has DNA hydrolytic activity. Is capable of both single- and double-stranded DNA cleavage, producing DNA fragments with 3'-OH ends. Can cleave chromatin to nucleosomal units and cleaves nucleosomal and liposome-coated DNA. Acts in internucleosomal DNA fragmentation (INDF) during apoptosis and necrosis. The role in apoptosis includes myogenic and neuronal differentiation, and BCR-mediated clonal deletion of self-reactive B cells. Is active on chromatin in apoptotic cell-derived membrane-coated microparticles and thus suppresses anti-DNA autoimmunity. Together with DNASE1, plays a key role in degrading neutrophil extracellular traps (NETs). NETs are mainly composed of DNA fibers and are released by neutrophils to bind pathogens during inflammation. Degradation of intravascular NETs by DNASE1 and DNASE1L3 is required to prevent formation of clots that obstruct blood vessels and cause organ damage following inflammation. The polypeptide is Deoxyribonuclease gamma (Homo sapiens (Human)).